A 133-amino-acid polypeptide reads, in one-letter code: MNYKVYATGNKIEKFYSDAIKEYQKRLNRFCNISFTNYKNPQQLPKQQIDKYYKIGILPSGKSLSSEELAEKIKELELSAKTDILIVIGNEEIPLNESISISPMEMSLGLASTILFEQLYRAYKILNNEPYHK.

S-adenosyl-L-methionine-binding positions include Ile-55, Gly-89, and 101-106 (ISPMEM).

The protein belongs to the RNA methyltransferase RlmH family. In terms of assembly, homodimer.

It is found in the cytoplasm. It catalyses the reaction pseudouridine(1915) in 23S rRNA + S-adenosyl-L-methionine = N(3)-methylpseudouridine(1915) in 23S rRNA + S-adenosyl-L-homocysteine + H(+). Its function is as follows. Specifically methylates the pseudouridine at position 1915 (m3Psi1915) in 23S rRNA. The sequence is that of Ribosomal RNA large subunit methyltransferase H 1 from Thermoanaerobacter sp. (strain X514).